A 166-amino-acid polypeptide reads, in one-letter code: Co-chaperone protein HscB homolog (166 aa).

One can recognise a J domain in the interval 3–75 (QYFTLFRIEP…IDRAAYLLKT (73 aa)).

It belongs to the HscB family. As to quaternary structure, interacts with HscA and stimulates its ATPase activity.

In terms of biological role, co-chaperone involved in the maturation of iron-sulfur cluster-containing proteins. Seems to help targeting proteins to be folded toward HscA. The sequence is that of Co-chaperone protein HscB homolog from Neisseria meningitidis serogroup C (strain 053442).